Reading from the N-terminus, the 247-residue chain is tRNA (guanine-N(1)-)-methyltransferase (247 aa).

Residues Gly-116 and 135–140 (IGDYVL) contribute to the S-adenosyl-L-methionine site.

The protein belongs to the RNA methyltransferase TrmD family. In terms of assembly, homodimer.

It localises to the cytoplasm. The enzyme catalyses guanosine(37) in tRNA + S-adenosyl-L-methionine = N(1)-methylguanosine(37) in tRNA + S-adenosyl-L-homocysteine + H(+). Its function is as follows. Specifically methylates guanosine-37 in various tRNAs. This is tRNA (guanine-N(1)-)-methyltransferase from Symbiobacterium thermophilum (strain DSM 24528 / JCM 14929 / IAM 14863 / T).